A 390-amino-acid chain; its full sequence is Putative 8-amino-7-oxononanoate synthase (390 aa).

Substrate is bound at residue Arg19. 105 to 106 provides a ligand contact to pyridoxal 5'-phosphate; sequence GY. His130 lines the substrate pocket. Residues Ser177, 202–205, and 234–237 contribute to the pyridoxal 5'-phosphate site; these read DEAH and TFSK. At Lys237 the chain carries N6-(pyridoxal phosphate)lysine. Thr351 is a binding site for substrate.

This sequence belongs to the class-II pyridoxal-phosphate-dependent aminotransferase family. BioF subfamily. Homodimer. The cofactor is pyridoxal 5'-phosphate.

It catalyses the reaction 6-carboxyhexanoyl-[ACP] + L-alanine + H(+) = (8S)-8-amino-7-oxononanoate + holo-[ACP] + CO2. Its pathway is cofactor biosynthesis; biotin biosynthesis. Catalyzes the decarboxylative condensation of pimeloyl-[acyl-carrier protein] and L-alanine to produce 8-amino-7-oxononanoate (AON), [acyl-carrier protein], and carbon dioxide. The sequence is that of Putative 8-amino-7-oxononanoate synthase (bioF) from Geobacillus kaustophilus (strain HTA426).